The sequence spans 358 residues: 3-dehydroquinate synthase (358 aa).

Residues 102–106 (GVVGD), 126–127 (TT), lysine 138, and lysine 147 contribute to the NAD(+) site. Positions 180, 243, and 260 each coordinate Zn(2+).

The protein belongs to the sugar phosphate cyclases superfamily. Dehydroquinate synthase family. It depends on Co(2+) as a cofactor. Zn(2+) serves as cofactor. The cofactor is NAD(+).

It localises to the cytoplasm. The enzyme catalyses 7-phospho-2-dehydro-3-deoxy-D-arabino-heptonate = 3-dehydroquinate + phosphate. Its pathway is metabolic intermediate biosynthesis; chorismate biosynthesis; chorismate from D-erythrose 4-phosphate and phosphoenolpyruvate: step 2/7. Functionally, catalyzes the conversion of 3-deoxy-D-arabino-heptulosonate 7-phosphate (DAHP) to dehydroquinate (DHQ). This Shouchella clausii (strain KSM-K16) (Alkalihalobacillus clausii) protein is 3-dehydroquinate synthase.